The following is a 154-amino-acid chain: uncharacterized protein (154 aa).

3 residues coordinate a divalent metal cation: His-47, His-127, and His-131. Residue Tyr-150 is modified to Phosphotyrosine.

It belongs to the DinB family. As to quaternary structure, homodimer.

This is an uncharacterized protein from Bacillus subtilis (strain 168).